The following is a 155-amino-acid chain: 3-dehydroquinate dehydratase (155 aa).

Tyrosine 31 (proton acceptor) is an active-site residue. Positions 83, 89, and 96 each coordinate substrate. Histidine 109 (proton donor) is an active-site residue. Residues 110–111 and arginine 120 each bind substrate; that span reads LS.

The protein belongs to the type-II 3-dehydroquinase family. In terms of assembly, homododecamer.

The catalysed reaction is 3-dehydroquinate = 3-dehydroshikimate + H2O. The protein operates within metabolic intermediate biosynthesis; chorismate biosynthesis; chorismate from D-erythrose 4-phosphate and phosphoenolpyruvate: step 3/7. Its function is as follows. Catalyzes a trans-dehydration via an enolate intermediate. The protein is 3-dehydroquinate dehydratase of Laribacter hongkongensis (strain HLHK9).